The chain runs to 341 residues: Anthranilate phosphoribosyltransferase (341 aa).

5-phospho-alpha-D-ribose 1-diphosphate-binding positions include G83, S91, 93 to 96 (NTST), 111 to 115 (KHGNR), and S123. An anthranilate-binding site is contributed by G83. Residue S95 coordinates Mg(2+). N114 is a binding site for anthranilate. An anthranilate-binding site is contributed by R169. Mg(2+)-binding residues include D228 and E229.

This sequence belongs to the anthranilate phosphoribosyltransferase family. Homodimer. It depends on Mg(2+) as a cofactor.

It carries out the reaction N-(5-phospho-beta-D-ribosyl)anthranilate + diphosphate = 5-phospho-alpha-D-ribose 1-diphosphate + anthranilate. Its pathway is amino-acid biosynthesis; L-tryptophan biosynthesis; L-tryptophan from chorismate: step 2/5. Catalyzes the transfer of the phosphoribosyl group of 5-phosphorylribose-1-pyrophosphate (PRPP) to anthranilate to yield N-(5'-phosphoribosyl)-anthranilate (PRA). The protein is Anthranilate phosphoribosyltransferase of Hyphomonas neptunium (strain ATCC 15444).